The primary structure comprises 632 residues: Actin-related protein 8 (632 aa).

Residues 1–30 (MTQAEREQENGKEKEKEREKEKEKEKEQRG) are compositionally biased toward basic and acidic residues. The interval 1–43 (MTQAEREQENGKEKEKEREKEKEKEKEQRGIKRPIAPPVIPEP) is disordered. Residue 288–291 (DVGD) coordinates ATP. 2 disordered regions span residues 410-429 (MTSL…DEHY) and 434-494 (QSKQ…GGAE). Positions 434–443 (QSKQDQSSKA) are enriched in low complexity.

The protein belongs to the actin family. ARP8 subfamily. Component of the chromatin remodeling INO80 complex; specifically part of a complex module associated with the DBINO domain of INO80. Exists as monomers and dimers, but the dimer is most probably the biologically relevant form required for stable interactions with histones that exploits the twofold symmetry of the nucleosome core.

It is found in the nucleus. It localises to the chromosome. In terms of biological role, plays an important role in the functional organization of mitotic chromosomes. Exhibits low basal ATPase activity, and unable to polymerize. Its function is as follows. Proposed core component of the chromatin remodeling INO80 complex which is involved in transcriptional regulation, DNA replication and probably DNA repair. Required for the recruitment of INO80 (and probably the INO80 complex) to sites of DNA damage Strongly prefer nucleosomes and H3-H4 tetramers over H2A-H2B dimers, suggesting it may act as a nucleosome recognition module within the complex. This chain is Actin-related protein 8 (actr8), found in Salmo salar (Atlantic salmon).